Here is a 96-residue protein sequence, read N- to C-terminus: MARTCVVTGKGTTAGNNVSHSHKKNRRIWKVNVITKKIFLEDENRWVRVKISTRALRTLRKKGLKVAIKDHGGDITAITPKKYVGITPKAQPVATA.

It belongs to the bacterial ribosomal protein bL28 family.

The sequence is that of Large ribosomal subunit protein bL28 from Leptospira biflexa serovar Patoc (strain Patoc 1 / Ames).